A 137-amino-acid chain; its full sequence is Small ribosomal subunit protein bS6 (137 aa).

A disordered region spans residues 113 to 137; the sequence is EEQREKKNFRKPFIKREEAATKENK. A compositionally biased stretch (basic and acidic residues) spans 126-137; that stretch reads IKREEAATKENK.

It belongs to the bacterial ribosomal protein bS6 family.

In terms of biological role, binds together with bS18 to 16S ribosomal RNA. The protein is Small ribosomal subunit protein bS6 of Mycoplasma capricolum subsp. capricolum (strain California kid / ATCC 27343 / NCTC 10154).